We begin with the raw amino-acid sequence, 570 residues long: Urease subunit alpha (570 aa).

The 440-residue stretch at 131 to 570 (GGVDTHIHFI…LPMAQRYFLF (440 aa)) folds into the Urease domain. Ni(2+) contacts are provided by His136, His138, and Lys219. Lys219 is subject to N6-carboxylysine. His221 lines the substrate pocket. The Ni(2+) site is built by His248 and His274. His322 acts as the Proton donor in catalysis. Asp362 is a binding site for Ni(2+).

Belongs to the metallo-dependent hydrolases superfamily. Urease alpha subunit family. As to quaternary structure, heterotrimer of UreA (gamma), UreB (beta) and UreC (alpha) subunits. Three heterotrimers associate to form the active enzyme. Ni cation serves as cofactor. Carboxylation allows a single lysine to coordinate two nickel ions.

The protein resides in the cytoplasm. The enzyme catalyses urea + 2 H2O + H(+) = hydrogencarbonate + 2 NH4(+). Its pathway is nitrogen metabolism; urea degradation; CO(2) and NH(3) from urea (urease route): step 1/1. The chain is Urease subunit alpha from Methylocella silvestris (strain DSM 15510 / CIP 108128 / LMG 27833 / NCIMB 13906 / BL2).